The chain runs to 242 residues: Type III pantothenate kinase (242 aa).

5-12 (DLGNTRLK) is a binding site for ATP. Substrate contacts are provided by residues Y94 and 100-103 (GCDR). Residue D102 is the Proton acceptor of the active site. Residue T124 participates in ATP binding. Residue T175 participates in substrate binding.

Belongs to the type III pantothenate kinase family. As to quaternary structure, homodimer. The cofactor is NH4(+). Requires K(+) as cofactor.

The protein localises to the cytoplasm. It carries out the reaction (R)-pantothenate + ATP = (R)-4'-phosphopantothenate + ADP + H(+). It functions in the pathway cofactor biosynthesis; coenzyme A biosynthesis; CoA from (R)-pantothenate: step 1/5. Its function is as follows. Catalyzes the phosphorylation of pantothenate (Pan), the first step in CoA biosynthesis. The sequence is that of Type III pantothenate kinase from Psychrobacter cryohalolentis (strain ATCC BAA-1226 / DSM 17306 / VKM B-2378 / K5).